A 24-amino-acid polypeptide reads, in one-letter code: Humanin-like 11 (24 aa).

Belongs to the humanin family.

Its subcellular location is the secreted. The protein localises to the cytoplasm. Its function is as follows. Plays a role as a neuroprotective and antiapoptotic factor. The polypeptide is Humanin-like 11 (Homo sapiens (Human)).